We begin with the raw amino-acid sequence, 185 residues long: Pro-adrenomedullin (185 aa).

Positions 1 to 21 (MKLVSVALMYLGSLAFLGADT) are cleaved as a signal peptide. Arginine amide is present on Arg41. The propeptide occupies 45-92 (ELRMSSSYPTGLADVKAGPAQTLIRPQDMKGASRSPEDSSPDAARIRV). Positions 60-87 (KAGPAQTLIRPQDMKGASRSPEDSSPDA) are disordered. A disulfide bridge links Cys110 with Cys115. Positions 133-185 (DNVAPRSKISPQGYGRRRRRSLPEAGPGRTLVSSKPQAHGAPAPPSGSAPHFL) are disordered. Tyr146 is modified (tyrosine amide). Positions 148-185 (RRRRRSLPEAGPGRTLVSSKPQAHGAPAPPSGSAPHFL) are cleaved as a propeptide — preproAM C-terminal fragment.

The protein belongs to the adrenomedullin family. As to expression, highest levels found in pheochromocytoma and adrenal medulla. Also found in lung, ventricle and kidney tissues.

The protein localises to the secreted. Functionally, adrenomedullin/ADM and proadrenomedullin N-20 terminal peptide/PAMP are peptide hormones that act as potent hypotensive and vasodilatator agents. Numerous actions have been reported most related to the physiologic control of fluid and electrolyte homeostasis. In the kidney, ADM is diuretic and natriuretic, and both ADM and PAMP inhibit aldosterone secretion by direct adrenal actions. In pituitary gland, both peptides at physiologically relevant doses inhibit basal ACTH secretion. Both peptides appear to act in brain and pituitary gland to facilitate the loss of plasma volume, actions which complement their hypotensive effects in blood vessels. ADM function is mediated by the CALCRL-RAMP2 and CALCRL-RAMP3 receptor complexes with ADM showing the highest potency for the CALCRL-RAMP2 complex. This is Pro-adrenomedullin from Homo sapiens (Human).